Here is a 418-residue protein sequence, read N- to C-terminus: Queuine tRNA-ribosyltransferase accessory subunit 2 (418 aa).

Residues cysteine 325, cysteine 327, cysteine 330, and histidine 356 each contribute to the Zn(2+) site.

The protein belongs to the queuine tRNA-ribosyltransferase family. QTRT2 subfamily. In terms of assembly, heterodimer of a catalytic subunit and an accessory subunit. Requires Zn(2+) as cofactor.

The protein resides in the cytoplasm. Its function is as follows. Non-catalytic subunit of the queuine tRNA-ribosyltransferase (TGT) that catalyzes the base-exchange of a guanine (G) residue with queuine (Q) at position 34 (anticodon wobble position) in tRNAs with GU(N) anticodons (tRNA-Asp, -Asn, -His and -Tyr), resulting in the hypermodified nucleoside queuosine (7-(((4,5-cis-dihydroxy-2-cyclopenten-1-yl)amino)methyl)-7-deazaguanosine). This is Queuine tRNA-ribosyltransferase accessory subunit 2 from Drosophila yakuba (Fruit fly).